Here is a 299-residue protein sequence, read N- to C-terminus: MSSIKIECVLPENCHCGESPVWEEASGSLLFVDIPGKKFCRWNPLTKAVQRMTMDAPVTSVALRKSGGYVATVGTKFCALNLEDQSVVALATVDKDKKNNRFNDGKVDPAGRYFAGTMAEETAPAVLERHQGSLYALFPDHQVKKYFDQVDISNGLDWSLDHKIFYYIDSLAYSVDAFDYDLQTGQISNRRSIYKLEKEEQIPDGMCIDTEGKLWVACYNGGRVIRLDPETGKRLQTVKLPVDKTTSCCFGGKDYSEMYVTCARDGLDPDSLSRQPEAGGIFKITGLGVKGIPPYSYAG.

E18 is a binding site for a divalent metal cation. The substrate site is built by R101, N103, and E121. K144 bears the N6-succinyllysine mark. A divalent metal cation is bound by residues N154 and D204. D204 acts as the Proton donor/acceptor in catalysis. An N6-succinyllysine mark is found at K244 and K253.

Belongs to the SMP-30/CGR1 family. Monomer. The cofactor is Zn(2+). It depends on Mn(2+) as a cofactor. Ca(2+) serves as cofactor. Mg(2+) is required as a cofactor.

Its subcellular location is the cytoplasm. The catalysed reaction is D-glucono-1,5-lactone + H2O = D-gluconate + H(+). The protein operates within cofactor biosynthesis; L-ascorbate biosynthesis via UDP-alpha-D-glucuronate pathway; L-ascorbate from UDP-alpha-D-glucuronate: step 3/4. Gluconolactonase with low activity towards other sugar lactones, including gulonolactone and galactonolactone. Catalyzes a key step in ascorbic acid (vitamin C) biosynthesis. Can also hydrolyze diisopropyl phosphorofluoridate and phenylacetate (in vitro). Calcium-binding protein. Modulates Ca(2+) signaling, and Ca(2+)-dependent cellular processes and enzyme activities. In Oryctolagus cuniculus (Rabbit), this protein is Regucalcin (RGN).